The sequence spans 324 residues: 4-hydroxyphenylpyruvate 3-dimethylallyltransferase (324 aa).

Residues Arg-160 and Glu-281 each contribute to the substrate site.

Belongs to the aromatic prenyltransferase family. In terms of assembly, monomer.

It catalyses the reaction 3-(4-hydroxyphenyl)pyruvate + dimethylallyl diphosphate = 3-dimethylallyl-4-hydroxyphenylpyruvate + diphosphate. The protein operates within antibiotic biosynthesis. Its function is as follows. Magnesium-independent aromatic prenyltransferase that catalyzes the irreversible transfer of a dimethylallyl group to 4-hydroxyphenylpyruvate to produce the ring A structure in the clorobiocin biosynthesis pathway. Clorobiocin is an aminocoumarin family antibiotic. This is 4-hydroxyphenylpyruvate 3-dimethylallyltransferase from Streptomyces roseochromogenus subsp. oscitans.